We begin with the raw amino-acid sequence, 385 residues long: Probable protein phosphatase 2C 79 (385 aa).

The signal sequence occupies residues Met-1–Ser-18. Residues Asp-47–Leu-356 enclose the PPM-type phosphatase domain. Ser-76 bears the Phosphoserine mark. Residues Asp-87, Gly-88, Asp-288, and Asp-347 each contribute to the Mn(2+) site.

This sequence belongs to the PP2C family. Mg(2+) is required as a cofactor. It depends on Mn(2+) as a cofactor.

It carries out the reaction O-phospho-L-seryl-[protein] + H2O = L-seryl-[protein] + phosphate. It catalyses the reaction O-phospho-L-threonyl-[protein] + H2O = L-threonyl-[protein] + phosphate. Its function is as follows. May dephosphorylate and repress plasma membrane H(+)-ATPases (PM H(+)-ATPases, e.g. AHA1 and AHA2), thus influencing negatively plant growth and fitness. This is Probable protein phosphatase 2C 79 from Arabidopsis thaliana (Mouse-ear cress).